The primary structure comprises 211 residues: Protein 33K (211 aa).

2 disordered regions span residues 1-95 and 107-140; these read MPPK…PCSL and AGSP…QDSP. Over residues 24 to 65 the composition is skewed to acidic residues; sequence DEEETWDDSQAEEVSDEEAEEQMESWDSLDEEDLEDVEEETI. The span at 83–92 shows a compositional bias: pro residues; it reads KTIPPLPPQP. Residues 129-140 are compositionally biased toward polar residues; the sequence is TSSAIATRQDSP. A necessary for nuclear subcellular location region spans residues 154–181; the sequence is YAIFQQSRGQQLELKVKNRSLRSLTRSC. Residues 160–180 form an RS-repeat; required for splicing enhancer activity region; it reads SRGQQLELKVKNRSLRSLTRS.

The protein belongs to the adenoviridae splicing factor family. As to quaternary structure, homooligomer. Interacts with DBP; this interaction occurs at a unique vertex during genome packaging. Interacts with IVa2; this interaction occurs at a unique vertex during genome packaging and seems to potentiate IVa2 and 33K oligomerization. In terms of processing, phosphorylated in vitro by human PKA and PRKDC. PRKDC inhibits, whereas PKA activates the splicing factor.

The protein resides in the host nucleus. In terms of biological role, promotes alternative splicing of late transcripts by promoting splicing at weak 3' splice sites. Required for the temporal activation of major late pre-mRNA splicing at late times of infection. Induces the splicing and expression of the late capsid vertex protein. Probably functions as the small terminase that is part of the molecular motor that translocates genomic DNA in empty capsid during DNA packaging. This motor is located at a unique vertex and comprises at least the IVa2 ATPase, the small terminase 33K and probably a portal. Forms a ring-like structure of about 17 nm in which genomic DNA is translocated into the capsid. Stimulates IVa2 ATPase activity in the presence of the viral genome. Once the DNA is packaged, the terminase detaches: the 33K protein is present in the empty particles, but not in the mature virions. Also involved in virion assembly. The chain is Protein 33K from Human adenovirus F serotype 40 (HAdV-40).